Consider the following 706-residue polypeptide: Vitamin B12-dependent ribonucleoside-diphosphate reductase (706 aa).

One can recognise an ATP-cone domain in the interval 21 to 109; sequence AKVRRRDGTL…IYRQRRAELR (89 aa). Substrate-binding positions include S191, 206–207, G235, 389–393, and 534–538; these read GC, NPCGE, and PTGTI. A disulfide bond links C207 and C402. The Proton acceptor role is filled by N389. Catalysis depends on C391, which acts as the Cysteine radical intermediate. E393 (proton acceptor) is an active-site residue.

Belongs to the ribonucleoside diphosphate reductase class-2 family. It depends on adenosylcob(III)alamin as a cofactor.

The catalysed reaction is a 2'-deoxyribonucleoside 5'-diphosphate + [thioredoxin]-disulfide + H2O = a ribonucleoside 5'-diphosphate + [thioredoxin]-dithiol. In terms of biological role, provides the precursors necessary for DNA synthesis. Catalyzes the biosynthesis of deoxyribonucleotides from the corresponding ribonucleotides. The chain is Vitamin B12-dependent ribonucleoside-diphosphate reductase (nrdZ) from Mycobacterium tuberculosis (strain ATCC 25618 / H37Rv).